The following is a 915-amino-acid chain: DNA repair-scaffolding protein (915 aa).

Residues 1–15 (MPRGSRARGSKRKRS) show a composition bias toward basic residues. 2 disordered regions span residues 1 to 30 (MPRGSRARGSKRKRSWNTECPSFPGERPLQ) and 56 to 114 (FQNT…EDKT). The segment covering 56 to 65 (FQNTSGNPSL) has biased composition (polar residues). Residues 67–85 (AEEKTITEKHLELCPRPKQ) are compositionally biased toward basic and acidic residues. The span at 86–107 (ETTTSKSTSGLTDITWSSSGSD) shows a compositional bias: polar residues. A necessary for interaction with RAD51 region spans residues 151–450 (EISDCASCAS…GTAWTHGHKE (300 aa)).

As to quaternary structure, found in a complex, at least composed of BLM, RAD51 and SPIDR; the complex formation is mediated by SPIDR. Interacts (via C-terminal region) with BLM; the interaction is direct. Interacts with RAD51; the interaction is direct. Interacts (via the C-terminal region) with FIGNL1 (via N-terminal one-half region); the interaction is direct.

The protein resides in the nucleus. In terms of biological role, plays a role in DNA double-strand break (DBS) repair via homologous recombination (HR). Serves as a scaffolding protein that helps to promote the recruitment of DNA-processing enzymes like the helicase BLM and recombinase RAD51 to site of DNA damage, and hence contributes to maintain genomic integrity. The chain is DNA repair-scaffolding protein (SPIDR) from Homo sapiens (Human).